We begin with the raw amino-acid sequence, 517 residues long: Benzoate 4-monooxygenase bphA (517 aa).

Residues 4–24 form a helical membrane-spanning segment; the sequence is LLLSPYGAYLGLALLVLYYLL. 2 N-linked (GlcNAc...) asparagine glycosylation sites follow: Asn282 and Asn325. Residue Cys461 coordinates heme.

The protein belongs to the cytochrome P450 family. It depends on heme as a cofactor.

It is found in the membrane. The enzyme catalyses benzoate + reduced [NADPH--hemoprotein reductase] + O2 = 4-hydroxybenzoate + oxidized [NADPH--hemoprotein reductase] + H2O + H(+). Its function is as follows. Cytochrome P450 monooxygenase; part of the benzoic acid degradation pathway also known as the protocatechuic acid pathway. Benzoic acid debradation begins with the conversion of benzoic acid into 4-hydroxybenzoic acid through hydroxylation by the benzoate-4-monooxygenase bphA, and its partner NADPH-cytochrome P450 reductase cprA which act as a mediator in electron donation from NADPH. 4-Hydroxybenzoic acid is then converted into 3,4-dihydroxybenzoic acid (also called protocatechuic acid) by the p-hydroxybenzoate-m-hydroxylase phhA. Protocatechuic acid is converted into 3-carboxy-cis,cis-muconic acid by the intradiol ring-cleavage dioxygenase prcA, which is further metabolized through the 3-oxoadipate pathway to finally enter the tricarboxylic acid cycle (TCA). In terms of biological role, responsible for cytochrome P450 dependent benzoate hydroxylation in microsomes; requires cprA as the mediator in electron donation from NADPH. The polypeptide is Benzoate 4-monooxygenase bphA (Aspergillus niger).